The following is a 357-amino-acid chain: Sorbitol dehydrogenase (357 aa).

Ala2 carries the post-translational modification N-acetylalanine. Position 45 (Cys45) interacts with Zn(2+). Tyr51 provides a ligand contact to substrate. The Zn(2+) site is built by His70 and Glu71. Glu156 lines the substrate pocket. Residues Ile184, Asp204, and Arg209 each coordinate NAD(+). Ser211 and Ser225 each carry phosphoserine. Residues 273–275 (VGL) and 297–299 (VFR) contribute to the NAD(+) site. Substrate contacts are provided by Arg299 and Tyr300.

It belongs to the zinc-containing alcohol dehydrogenase family. Homotetramer. Zn(2+) is required as a cofactor. Expressed in liver. Expressed in kidney and epithelial cells of both benign and malignant prostate tissue. Expressed in epididymis (at protein level).

Its subcellular location is the mitochondrion membrane. The protein localises to the cell projection. It localises to the cilium. The protein resides in the flagellum. It carries out the reaction keto-D-fructose + NADH + H(+) = D-sorbitol + NAD(+). The enzyme catalyses L-threitol + NAD(+) = L-erythrulose + NADH + H(+). The catalysed reaction is xylitol + NAD(+) = D-xylulose + NADH + H(+). It catalyses the reaction ribitol + NAD(+) = D-ribulose + NADH + H(+). It carries out the reaction (R,R)-butane-2,3-diol + NAD(+) = (R)-acetoin + NADH + H(+). The enzyme catalyses L-iditol + NAD(+) = keto-L-sorbose + NADH + H(+). Inhibited by CP-166,572, an inhibitor that is competitive with fructose. Also competitively inhibited by phenanthroline and 4-methylpyrazole in vitro. Polyol dehydrogenase that catalyzes the reversible NAD(+)-dependent oxidation of various sugar alcohols. Is mostly active with D-sorbitol (D-glucitol), L-threitol, xylitol and ribitol as substrates, leading to the C2-oxidized products D-fructose, L-erythrulose, D-xylulose, and D-ribulose, respectively. Is a key enzyme in the polyol pathway that interconverts glucose and fructose via sorbitol, which constitutes an important alternate route for glucose metabolism. The polyol pathway is believed to be involved in the etiology of diabetic complications, such as diabetic neuropathy and retinopathy, induced by hyperglycemia. May play a role in sperm motility by using sorbitol as an alternative energy source for sperm motility. May have a more general function in the metabolism of secondary alcohols since it also catalyzes the stereospecific oxidation of (2R,3R)-2,3-butanediol. To a lesser extent, can also oxidize L-arabinitol, galactitol and D-mannitol and glycerol in vitro. Oxidizes neither ethanol nor other primary alcohols. Cannot use NADP(+) as the electron acceptor. The polypeptide is Sorbitol dehydrogenase (SORD) (Homo sapiens (Human)).